A 116-amino-acid chain; its full sequence is Large ribosomal subunit protein bL20c (116 aa).

This sequence belongs to the bacterial ribosomal protein bL20 family.

The protein localises to the plastid. The protein resides in the chloroplast. In terms of biological role, binds directly to 23S ribosomal RNA and is necessary for the in vitro assembly process of the 50S ribosomal subunit. It is not involved in the protein synthesizing functions of that subunit. The chain is Large ribosomal subunit protein bL20c from Cyanidioschyzon merolae (strain NIES-3377 / 10D) (Unicellular red alga).